Reading from the N-terminus, the 178-residue chain is Large ribosomal subunit protein uL10 (178 aa).

The protein belongs to the universal ribosomal protein uL10 family. Part of the ribosomal stalk of the 50S ribosomal subunit. The N-terminus interacts with L11 and the large rRNA to form the base of the stalk. The C-terminus forms an elongated spine to which L12 dimers bind in a sequential fashion forming a multimeric L10(L12)X complex.

Forms part of the ribosomal stalk, playing a central role in the interaction of the ribosome with GTP-bound translation factors. This Salinibacter ruber (strain DSM 13855 / M31) protein is Large ribosomal subunit protein uL10.